A 658-amino-acid polypeptide reads, in one-letter code: Carnitine O-palmitoyltransferase 2, mitochondrial (658 aa).

Residues Met-1–Leu-25 constitute a mitochondrion transit peptide. The Mitochondrial matrix segment spans residues Ser-26–Leu-178. Position 69 is an N6-succinyllysine (Lys-69). Position 79 is an N6-acetyllysine (Lys-79). At Lys-85 the chain carries N6-succinyllysine. Positions Asn-179 to Asn-208 form an intramembrane region, note=Mitochondrial inner membrane. At Ala-209–Ser-658 the chain is on the mitochondrial matrix side. Residue Lys-239 is modified to N6-acetyllysine; alternate. Lys-239 carries the N6-succinyllysine; alternate modification. At Lys-305 the chain carries N6-acetyllysine. The active-site Proton acceptor is the His-372. Lys-424 and Lys-439 each carry N6-succinyllysine. Gly-452–Asp-464 is a binding site for CoA. Residues Tyr-486, Ser-488, and Thr-499 each coordinate (R)-carnitine. 2 positions are modified to N6-acetyllysine; alternate: Lys-510 and Lys-544. 2 positions are modified to N6-succinyllysine; alternate: Lys-510 and Lys-544.

This sequence belongs to the carnitine/choline acetyltransferase family.

It is found in the mitochondrion inner membrane. The catalysed reaction is (R)-carnitine + hexadecanoyl-CoA = O-hexadecanoyl-(R)-carnitine + CoA. The enzyme catalyses octanoyl-CoA + (R)-carnitine = O-octanoyl-(R)-carnitine + CoA. It catalyses the reaction decanoyl-CoA + (R)-carnitine = O-decanoyl-(R)-carnitine + CoA. It carries out the reaction dodecanoyl-CoA + (R)-carnitine = O-dodecanoyl-R-carnitine + CoA. The catalysed reaction is tetradecanoyl-CoA + (R)-carnitine = O-tetradecanoyl-(R)-carnitine + CoA. The enzyme catalyses (R)-carnitine + octadecanoyl-CoA = O-octadecanoyl-(R)-carnitine + CoA. It catalyses the reaction eicosanoyl-CoA + (R)-carnitine = O-eicosanoyl-(R)-carnitine + CoA. It carries out the reaction (9Z)-tetradecenoyl-CoA + (R)-carnitine = O-(9Z)-tetradecenoyl-(R)-carnitine + CoA. The catalysed reaction is (5Z)-tetradecenoyl-CoA + (R)-carnitine = O-(5Z)-tetradecenoyl-(R)-carnitine + CoA. The enzyme catalyses (R)-carnitine + (9Z)-octadecenoyl-CoA = O-(9Z)-octadecenoyl-(R)-carnitine + CoA. It catalyses the reaction 4,8-dimethylnonanoyl-CoA + (R)-carnitine = O-4,8-dimethylnonanoyl-(R)-carnitine + CoA. Its pathway is lipid metabolism; fatty acid beta-oxidation. Inhibited by trans-2-hexadecanoyl-CoA. Functionally, involved in the intramitochondrial synthesis of acylcarnitines from accumulated acyl-CoA metabolites. Reconverts acylcarnitines back into the respective acyl-CoA esters that can then undergo beta-oxidation, an essential step for the mitochondrial uptake of long-chain fatty acids and their subsequent beta-oxidation in the mitochondrion. Active with medium (C8-C12) and long-chain (C14-C18) acyl-CoA esters. The chain is Carnitine O-palmitoyltransferase 2, mitochondrial from Homo sapiens (Human).